The following is a 354-amino-acid chain: G protein alpha o subunit (354 aa).

Residue G2 is the site of N-myristoyl glycine attachment. C3 carries the S-palmitoyl cysteine lipid modification. The G-alpha domain maps to 32–354 (KDIKLLLLGA…ANNLRGCGLY (323 aa)). The tract at residues 35–48 (KLLLLGAGESGKST) is G1 motif. GTP-binding positions include 40–47 (GAGESGKS), 176–182 (LRTRVKT), 201–205 (DVGGQ), 270–273 (NKKD), and A326. Mg(2+) contacts are provided by S47 and T182. Residues 174–182 (DILRTRVKT) are G2 motif. The G3 motif stretch occupies residues 197 to 206 (FKLFDVGGQR). The segment at 266–273 (ILFLNKKD) is G4 motif. The G5 motif stretch occupies residues 324-329 (TCATDT).

The protein belongs to the G-alpha family. G(i/o/t/z) subfamily. G proteins are composed of 3 units; alpha, beta and gamma. The alpha chain contains the guanine nucleotide binding site. As to expression, expressed primarily in neuronal cell bodies in the brain, optic lobe, and thoracic and abdominal ganglia. Also expressed in antenna, oocytes and ovarian nurse cells.

Functionally, guanine nucleotide-binding proteins (G proteins) are involved as modulators or transducers in various transmembrane signaling systems. Plays a role in glial cell differentiation during embryogenesis; loco, Galphai and the G-protein coupled receptor, moody, are required in the surface glia to achieve effective insulation of the nerve cord. In Drosophila melanogaster (Fruit fly), this protein is G protein alpha o subunit (Galphao).